Here is a 607-residue protein sequence, read N- to C-terminus: Thymidine kinase (607 aa).

Disordered stretches follow at residues 1-160 (MAGF…ADST) and 180-215 (DDKS…PSGL). The segment covering 17 to 32 (KCQEDESPENERHENF) has biased composition (basic and acidic residues). Polar residues-rich tracts occupy residues 88–106 (AAVT…TSCP), 148–160 (RKTS…ADST), and 194–203 (RRPSSHSALK). Residue 291–298 (GAPGVGKT) coordinates ATP. The Proton acceptor role is filled by Glu317. Residue Gln355 coordinates substrate. Arg445 contributes to the ATP binding site. Arg451 contributes to the substrate binding site.

This sequence belongs to the herpesviridae thymidine kinase family. Homodimer.

Its subcellular location is the virion tegument. It is found in the host nucleus. It carries out the reaction thymidine + ATP = dTMP + ADP + H(+). Functionally, catalyzes the transfer of the gamma-phospho group of ATP to thymidine to generate dTMP in the salvage pathway of pyrimidine synthesis. The dTMP serves as a substrate for DNA polymerase during viral DNA replication. Allows the virus to be reactivated and to grow in non-proliferative cells lacking a high concentration of phosphorylated nucleic acid precursors. In Homo sapiens (Human), this protein is Thymidine kinase.